Consider the following 199-residue polypeptide: Small ribosomal subunit protein uS4 (199 aa).

The S4 RNA-binding domain maps to 91–153; it reads ARLDNVVYRM…SKNFVVIKEA (63 aa).

Belongs to the universal ribosomal protein uS4 family. As to quaternary structure, part of the 30S ribosomal subunit. Contacts protein S5. The interaction surface between S4 and S5 is involved in control of translational fidelity.

One of the primary rRNA binding proteins, it binds directly to 16S rRNA where it nucleates assembly of the body of the 30S subunit. In terms of biological role, with S5 and S12 plays an important role in translational accuracy. The sequence is that of Small ribosomal subunit protein uS4 from Exiguobacterium sibiricum (strain DSM 17290 / CCUG 55495 / CIP 109462 / JCM 13490 / 255-15).